We begin with the raw amino-acid sequence, 378 residues long: Anhydro-N-acetylmuramic acid kinase 2 (378 aa).

14-22 lines the ATP pocket; that stretch reads GTVLDGNID.

The protein belongs to the anhydro-N-acetylmuramic acid kinase family.

It carries out the reaction 1,6-anhydro-N-acetyl-beta-muramate + ATP + H2O = N-acetyl-D-muramate 6-phosphate + ADP + H(+). The protein operates within amino-sugar metabolism; 1,6-anhydro-N-acetylmuramate degradation. It participates in cell wall biogenesis; peptidoglycan recycling. Its function is as follows. Catalyzes the specific phosphorylation of 1,6-anhydro-N-acetylmuramic acid (anhMurNAc) with the simultaneous cleavage of the 1,6-anhydro ring, generating MurNAc-6-P. Is required for the utilization of anhMurNAc either imported from the medium or derived from its own cell wall murein, and thus plays a role in cell wall recycling. This is Anhydro-N-acetylmuramic acid kinase 2 from Jannaschia sp. (strain CCS1).